Consider the following 267-residue polypeptide: B3 domain-containing protein Os02g0455800 (267 aa).

Residues 30–131 (EKFLMPSDLC…RLFICCRLGT (102 aa)) constitute a DNA-binding region (TF-B3). The disordered stretch occupies residues 172–221 (QARLHDGNQDGGGAPSRHVPSSGRRVEAQLSRVSSRRQRRTMKHSIPEPT). A compositionally biased stretch (basic residues) spans 205 to 214 (SSRRQRRTMK).

It localises to the nucleus. This is B3 domain-containing protein Os02g0455800 from Oryza sativa subsp. japonica (Rice).